The sequence spans 295 residues: Cop9 signalosome-interactor 1 (295 aa).

Component of a COP9 signalosome-like (CSN) complex, composed of RRI1/CSN5, CSN9, RRI2/CSN10, PCI8/CSN11, CSN12 and CSI1. In the complex, it probably interacts directly with CSN9 and CSN12. Interacts also with RPN5.

It is found in the cytoplasm. The protein resides in the nucleus. Component of the COP9 signalosome (CSN) complex that acts as an regulator of the ubiquitin (Ubl) conjugation pathway by mediating the deneddylation of the cullin subunit of SCF-type E3 ubiquitin-protein ligase complexes The CSN complex is involved in the regulation of the mating pheromone response. This chain is Cop9 signalosome-interactor 1 (CSI1), found in Saccharomyces cerevisiae (strain ATCC 204508 / S288c) (Baker's yeast).